The chain runs to 337 residues: Phosphate acyltransferase (337 aa).

The protein belongs to the PlsX family. Homodimer. Probably interacts with PlsY.

Its subcellular location is the cytoplasm. The catalysed reaction is a fatty acyl-[ACP] + phosphate = an acyl phosphate + holo-[ACP]. Its pathway is lipid metabolism; phospholipid metabolism. In terms of biological role, catalyzes the reversible formation of acyl-phosphate (acyl-PO(4)) from acyl-[acyl-carrier-protein] (acyl-ACP). This enzyme utilizes acyl-ACP as fatty acyl donor, but not acyl-CoA. This chain is Phosphate acyltransferase, found in Acidobacterium capsulatum (strain ATCC 51196 / DSM 11244 / BCRC 80197 / JCM 7670 / NBRC 15755 / NCIMB 13165 / 161).